Consider the following 666-residue polypeptide: MTSSSLFREGELGHFCLNKQEMLHLNVTNPNSIYIEGKLSFEGYKSFNIHCYVDTGASLCIASRYIIPEELWENSPKDIQVKIANQELIKITKVCKNLKVKFAGKSFEIPTVYQQETGIDFLIGNNFCRLYNPFIQWEDRIAFHLKNEMVLIKKVTKAFSVSNPSFLENMKKDSKTEQIPGTNISKNIINPEERYFLITEKYQKIEQLLDKVCSENPIDPIKSKQWMKASIKLIDPLKVIRVKPMSYSPQDREGFAKQIKELLDLGLIIPSKSQHMSPAFLVENEAERRRGKKRMVVNYKAINQATIGDSHNLPNMQELLTLLRGKSIFSSFDCKSGFWQVVLDEESQKLTAFTCPQGHFQWKVVPFGLKQAPSIFQRHMQTALNGADKFCMVYVDDIIVFSNSELDHYNHVYAVLKIVEKYGIILSKKKANLFKEKINFLGLEIDKGTHCPQNHILENIHKFPDRLEDKKHLQRFLGVLTYAETYIPKLAEIRKPLQVKLKKDVTWNWTQSDSDYVKKIKKNLGSFPKLYLPKPEDHLIIETDASDSFWGGVLKARALDGVELICRYSSGSFKQAEKNYHSNDKELLAVKQVITKFSAYLTPVRFTVRTDNKNFTYFLRINLKGDSKQGRLVRWQNWFSKYQFDVEHLEGVKNVLADCLTRDFNA.

Residue aspartate 54 is part of the active site. Residues 215 to 445 (ENPIDPIKSK…EKINFLGLEI (231 aa)) form the Reverse transcriptase domain.

It belongs to the caulimoviridae enzymatic polyprotein family.

The catalysed reaction is DNA(n) + a 2'-deoxyribonucleoside 5'-triphosphate = DNA(n+1) + diphosphate. In terms of biological role, encodes for at least two polypeptides: protease (PR) and reverse transcriptase (RT). The protease processes the polyprotein in cis. Reverse transcriptase is multifunctional enzyme that converts the viral RNA genome into dsDNA in viral cytoplasmic capsids. This enzyme displays a DNA polymerase activity that can copy either DNA or RNA templates, and a ribonuclease H (RNase H) activity that cleaves the RNA strand of RNA-DNA heteroduplexes in a partially processive 3'- to 5'-endonucleasic mode. Neo-synthesized pregenomic RNA (pgRNA) are encapsidated, and reverse-transcribed inside the nucleocapsid. Partial (+)DNA is synthesized from the (-)DNA template and generates the relaxed circular DNA (RC-DNA) genome. After budding and infection, the RC-DNA migrates in the nucleus, and is converted into a plasmid-like covalently closed circular DNA (cccDNA). In Figwort mosaic virus (strain DxS) (FMV), this protein is Enzymatic polyprotein.